The following is a 223-amino-acid chain: MQWAVGRRWAWAALLLAVAAVLTQVVWLWLGTQSFVFQREEIAQLARQYAGLDHELAFSRLIVELRRLHPGHVLPDEELQWVFVNAGGWMGAMCLLHASLSEYVLLFGTALGSRGHSGRYWAEISDTIISGTFHQWREGTTKSEVFYPGETVVHGPGEATAVEWGPNTWMVEYGRGVIPSTLAFALADTVFSTQDFLTLFYTLRSYARGLRLELTTYLFGQDP.

The Lumenal portion of the chain corresponds to 1 to 9; the sequence is MQWAVGRRW. Residues 2-8 form a targeting to endoplasmic reticulum-associated lipid droplets region; that stretch reads QWAVGRR. Residues 10–30 form a helical membrane-spanning segment; it reads AWAALLLAVAAVLTQVVWLWL. The Cytoplasmic segment spans residues 31-223; the sequence is GTQSFVFQRE…LTTYLFGQDP (193 aa). The important for ligand-binding stretch occupies residues 99 to 106; sequence SLSEYVLL. Residues 177–223 are C-terminal hydrophobic region; that stretch reads VIPSTLAFALADTVFSTQDFLTLFYTLRSYARGLRLELTTYLFGQDP.

The protein belongs to the ERG2 family. As to quaternary structure, homotrimer. Forms a ternary complex with ANK2 and ITPR3. The complex is disrupted by agonists. Interacts with KCNA4. Interacts with KCNA2; cocaine consumption leads to increased interaction. Interacts with RNF112 in an oxidative stress-regulated manner. Widely expressed with higher expression in liver, colon, prostate, placenta, small intestine, heart and pancreas. Expressed in the retina by retinal pigment epithelial cells. Expressed in alpha-motor neurons.

Its subcellular location is the nucleus inner membrane. It is found in the nucleus outer membrane. It localises to the nucleus envelope. The protein resides in the cytoplasmic vesicle. The protein localises to the endoplasmic reticulum membrane. Its subcellular location is the membrane. It is found in the lipid droplet. It localises to the cell junction. The protein resides in the cell membrane. The protein localises to the cell projection. Its subcellular location is the growth cone. It is found in the postsynaptic density membrane. Functions in lipid transport from the endoplasmic reticulum and is involved in a wide array of cellular functions probably through regulation of the biogenesis of lipid microdomains at the plasma membrane. Involved in the regulation of different receptors it plays a role in BDNF signaling and EGF signaling. Also regulates ion channels like the potassium channel and could modulate neurotransmitter release. Plays a role in calcium signaling through modulation together with ANK2 of the ITP3R-dependent calcium efflux at the endoplasmic reticulum. Plays a role in several other cell functions including proliferation, survival and death. Originally identified for its ability to bind various psychoactive drugs it is involved in learning processes, memory and mood alteration. Necessary for proper mitochondrial axonal transport in motor neurons, in particular the retrograde movement of mitochondria. Plays a role in protecting cells against oxidative stress-induced cell death via its interaction with RNF112. The protein is Sigma non-opioid intracellular receptor 1 (SIGMAR1) of Homo sapiens (Human).